A 287-amino-acid chain; its full sequence is MKSRLFIISQYLLPHHLLSRLAGCIAECRVRWFKNAFTAWFAKRYQVNMSEALVEDLSAYEHFNAFFTRALKPGARPLDETPGAILCPADGAVSQLGPIEHGRIFQAKGHGFSAQELLGGDPAMAAPFMGGEFATIYLSPKDYHRVHMPLAGTLREMVYVPGRLFSVNQTTAENVPELFARNERVVCLFDTERGPMAVVLVGAMIVASIETVWAGLVTPPKRELKTFRYDEASRTPIHLEKGAELGRFKLGSTAIVLFGPEQVKWAESLGAGSAVRMGQQLAAPAQA.

Catalysis depends on charge relay system; for autoendoproteolytic cleavage activity residues Asp90, His147, and Ser252. Ser252 functions as the Schiff-base intermediate with substrate; via pyruvic acid; for decarboxylase activity in the catalytic mechanism. Ser252 is modified (pyruvic acid (Ser); by autocatalysis).

The protein belongs to the phosphatidylserine decarboxylase family. PSD-B subfamily. Prokaryotic type I sub-subfamily. As to quaternary structure, heterodimer of a large membrane-associated beta subunit and a small pyruvoyl-containing alpha subunit. Requires pyruvate as cofactor. Is synthesized initially as an inactive proenzyme. Formation of the active enzyme involves a self-maturation process in which the active site pyruvoyl group is generated from an internal serine residue via an autocatalytic post-translational modification. Two non-identical subunits are generated from the proenzyme in this reaction, and the pyruvate is formed at the N-terminus of the alpha chain, which is derived from the carboxyl end of the proenzyme. The autoendoproteolytic cleavage occurs by a canonical serine protease mechanism, in which the side chain hydroxyl group of the serine supplies its oxygen atom to form the C-terminus of the beta chain, while the remainder of the serine residue undergoes an oxidative deamination to produce ammonia and the pyruvoyl prosthetic group on the alpha chain. During this reaction, the Ser that is part of the protease active site of the proenzyme becomes the pyruvoyl prosthetic group, which constitutes an essential element of the active site of the mature decarboxylase.

The protein localises to the cell membrane. It catalyses the reaction a 1,2-diacyl-sn-glycero-3-phospho-L-serine + H(+) = a 1,2-diacyl-sn-glycero-3-phosphoethanolamine + CO2. The protein operates within phospholipid metabolism; phosphatidylethanolamine biosynthesis; phosphatidylethanolamine from CDP-diacylglycerol: step 2/2. Functionally, catalyzes the formation of phosphatidylethanolamine (PtdEtn) from phosphatidylserine (PtdSer). This chain is Phosphatidylserine decarboxylase proenzyme, found in Pseudomonas putida (strain ATCC 47054 / DSM 6125 / CFBP 8728 / NCIMB 11950 / KT2440).